The sequence spans 180 residues: Shikimate kinase (180 aa).

14-19 (GAGKSC) provides a ligand contact to ATP. Residue Ser-18 participates in Mg(2+) binding. Positions 36, 60, and 82 each coordinate substrate. ATP is bound at residue Arg-120. Substrate is bound at residue Arg-139.

The protein belongs to the shikimate kinase family. Monomer. Mg(2+) serves as cofactor.

Its subcellular location is the cytoplasm. The catalysed reaction is shikimate + ATP = 3-phosphoshikimate + ADP + H(+). It participates in metabolic intermediate biosynthesis; chorismate biosynthesis; chorismate from D-erythrose 4-phosphate and phosphoenolpyruvate: step 5/7. In terms of biological role, catalyzes the specific phosphorylation of the 3-hydroxyl group of shikimic acid using ATP as a cosubstrate. The sequence is that of Shikimate kinase from Xanthomonas axonopodis pv. citri (strain 306).